The following is a 359-amino-acid chain: Nicotinate-nucleotide--dimethylbenzimidazole phosphoribosyltransferase (359 aa).

The active-site Proton acceptor is glutamate 318.

Belongs to the CobT family. As to quaternary structure, homodimer.

The enzyme catalyses 5,6-dimethylbenzimidazole + nicotinate beta-D-ribonucleotide = alpha-ribazole 5'-phosphate + nicotinate + H(+). It participates in nucleoside biosynthesis; alpha-ribazole biosynthesis; alpha-ribazole from 5,6-dimethylbenzimidazole: step 1/2. In terms of biological role, catalyzes the synthesis of alpha-ribazole-5'-phosphate from nicotinate mononucleotide (NAMN) and 5,6-dimethylbenzimidazole (DMB). This is Nicotinate-nucleotide--dimethylbenzimidazole phosphoribosyltransferase from Escherichia coli O127:H6 (strain E2348/69 / EPEC).